We begin with the raw amino-acid sequence, 76 residues long: DNA-directed RNA polymerase subunit epsilon (76 aa).

This sequence belongs to the RNA polymerase subunit epsilon family. RNAP is composed of a core of 2 alpha, a beta and a beta' subunit. The core is associated with a delta subunit, and at least one of epsilon or omega. When a sigma factor is associated with the core the holoenzyme is formed, which can initiate transcription.

The catalysed reaction is RNA(n) + a ribonucleoside 5'-triphosphate = RNA(n+1) + diphosphate. Its function is as follows. A non-essential component of RNA polymerase (RNAP). In Streptococcus equi subsp. equi (strain 4047), this protein is DNA-directed RNA polymerase subunit epsilon.